We begin with the raw amino-acid sequence, 430 residues long: Multisubstrate adapter protein soc-1 (430 aa).

One can recognise a PH domain in the interval 7–133; it reads NIILEGSLKR…WVNEICKLCK (127 aa). The span at 192-222 shows a compositional bias: low complexity; it reads SHNSLPSNPNYNNLPDPLESSRSETSSMYSS. 3 disordered regions span residues 192 to 246, 275 to 303, and 315 to 377; these read SHNS…TRHT, EDAEDSSGETLKLDTPEQYPESVTSSEGF, and RRAP…RNLD. Residues 341-369 show a composition bias toward polar residues; sequence RNLSRNGVNENGNYSATFSSRTSNYQQSE.

Interacts (via C-terminus) with sem-5 (probably via SH3 domain 2). Interacts with nicotinic acetylcholine receptor. May be phosphorylated.

Adapter protein which modulates signaling mediated by several receptor tyrosine kinases. Plays a role in fluid homeostasis, probably downstream of receptor egl-15 and upstream of let-60/Ras. Involved in nicotinic acetylcholine receptor (nAChR)-mediated sensitivity to nicotine and levamisole and gamma-aminobutyric acid (GABA)receptor-mediated sensitivity to muscimol. Regulates synaptic levels of nAchR receptor subunit lev-1 and unc-38, and GABA receptor subunit unc-49 in the nerve cord, probably downstream of egl-15. Regulates motility. During the formation of neuromuscular junctions at the larval stage, down-regulates membrane protrusion from body wall muscles, probably downstream of egl-15. Promotes vulva induction and down-regulates fertility, probably downstream of receptor let-23. Down-regulates daf-2-mediated repression of dauer formation and positively regulates daf-2-mediated aging. May be involved in the recruitment of phosphatase ptp-2 to egl-15. The polypeptide is Multisubstrate adapter protein soc-1 (Caenorhabditis elegans).